We begin with the raw amino-acid sequence, 158 residues long: Small ribosomal subunit protein uS9 (158 aa).

The protein belongs to the universal ribosomal protein uS9 family.

This chain is Small ribosomal subunit protein uS9, found in Nitrobacter winogradskyi (strain ATCC 25391 / DSM 10237 / CIP 104748 / NCIMB 11846 / Nb-255).